The primary structure comprises 511 residues: Glucan endo-1,3-beta-glucosidase 1 (511 aa).

Positions 1–28 (MAFTSMVSTVPVLFFFFTLLLISANSSS) are cleaved as a signal peptide. Asn-109 is a glycosylation site (N-linked (GlcNAc...) asparagine). The Proton donor role is filled by Glu-137. N-linked (GlcNAc...) asparagine glycosylation is found at Asn-192 and Asn-274. Residue Glu-284 is the Nucleophile of the active site. N-linked (GlcNAc...) asparagine glycans are attached at residues Asn-374, Asn-378, Asn-407, Asn-473, and Asn-480. The cysteines at positions 382 and 445 are disulfide-linked. A lipid anchor (GPI-anchor amidated alanine) is attached at Ala-485. Positions 486–511 (AGEATSRSLSRGFCVTIMILVTFSIL) are cleaved as a propeptide — removed in mature form.

The protein belongs to the glycosyl hydrolase 17 family. Contains two additional disulfide bonds.

It localises to the cell membrane. The enzyme catalyses Hydrolysis of (1-&gt;3)-beta-D-glucosidic linkages in (1-&gt;3)-beta-D-glucans.. The protein is Glucan endo-1,3-beta-glucosidase 1 of Arabidopsis thaliana (Mouse-ear cress).